The following is a 547-amino-acid chain: Cdc42-interacting protein 4 (547 aa).

The segment at 1 to 117 (MDWGTELWDQ…EMKQERKMHF (117 aa)) is required for translocation to the plasma membrane in response to insulin, podosome formation and interaction with AKAP9 and microtubules. The F-BAR domain maps to 1–264 (MDWGTELWDQ…AAESVDAKND (264 aa)). A coiled-coil region spans residues 67–259 (FSQQQSFVQL…EGMKVAAESV (193 aa)). Residues 293–483 (RVPSDSSLGT…YTEFDEDFEE (191 aa)) form an interaction with CDC42 region. The tract at residues 293 to 547 (RVPSDSSLGT…PTSYLRVTLN (255 aa)) is interaction with PDE6G. The segment at 294-323 (VPSDSSLGTPDGRPELRAASSRSRAKRWPF) is disordered. A phosphoserine mark is found at serine 296, serine 298, and serine 299. Positions 332-425 (TEDFSHLPPE…ESRVLSNRGD (94 aa)) form a coiled coil. The REM-1 domain maps to 337-414 (HLPPEQQRKR…VQKYEAWLAE (78 aa)). The interval 415 to 547 (AESRVLSNRG…PTSYLRVTLN (133 aa)) is required for interaction with FASLG and localization to lysosomes. The interval 420–485 (LSNRGDSLSR…EFDEDFEEPA (66 aa)) is disordered. At serine 426 the chain carries Phosphoserine. Residues 431–487 (TRPPDPPTTAPPDSSSSSNNSGSQDNKESSEEPPSEEGQDTPIYTEFDEDFEEPASP) form an interaction with DNM2 and WASL region. The span at 441–451 (PPDSSSSSNNS) shows a compositional bias: low complexity. The segment at 476–547 (EFDEDFEEPA…PTSYLRVTLN (72 aa)) is interaction with DNM1 and WASL. The tract at residues 484–547 (PASPIGQCVA…PTSYLRVTLN (64 aa)) is required for podosome formation. The SH3 domain maps to 486–547 (SPIGQCVAIY…PTSYLRVTLN (62 aa)). The segment at 490–547 (QCVAIYHFEGSSEGTVSMSEGEDLSLMEEDKGDGWTRVRRKQGGEGYVPTSYLRVTLN) is interaction with WAS. Positions 492 to 547 (VAIYHFEGSSEGTVSMSEGEDLSLMEEDKGDGWTRVRRKQGGEGYVPTSYLRVTLN) are interaction with ARHGAP17, DAAM1, DIAPH1 and DIAPH2.

The protein belongs to the FNBP1 family. In terms of assembly, homodimerizes, the dimers can polymerize end-to-end to form filamentous structures. Interacts specifically with GTP-bound CDC42 and RHOQ. Interacts with AKAP9, ARHGAP17, DAAM1, DIAPH1, DIAPH2, DNM1, DNM2, FASLG/FASL, GAPVD1, LYN, microtubules, SRC, WAS/WASP and WASL/N-WASP. Interacts with the ligand binding domain of the thyroid receptor (TR) in the presence of thyroid hormone. May interact with CTNNB1 and HD/HTT. Interacts with PDE6G. As to expression, expressed in adrenal gland, aorta, brain, heart, kidney, liver, skeletal muscle and spleen.

Its subcellular location is the cytoplasm. It is found in the cytoskeleton. The protein localises to the cell cortex. The protein resides in the lysosome. It localises to the golgi apparatus. Its subcellular location is the cell membrane. It is found in the cell projection. The protein localises to the phagocytic cup. Functionally, required to coordinate membrane tubulation with reorganization of the actin cytoskeleton during endocytosis. Also acts as a link between CDC42 signaling and regulation of the actin cytoskeleton. Binds to lipids such as phosphatidylinositol 4,5-bisphosphate and phosphatidylserine and promotes membrane invagination and the formation of tubules. Also enhances actin polymerization in the vicinity of membrane tubules by recruiting WASL/N-WASP which in turn activates the Arp2/3 complex. Actin polymerization and dynamin may promote the fission of membrane tubules to form endocytic vesicles. Required for the formation of podosomes, actin-rich adhesion structures specific to monocyte-derived cells. Required for translocation of GLUT4 to the plasma membrane in response to insulin signaling. May be required for the lysosomal retention of FASLG/FASL. The sequence is that of Cdc42-interacting protein 4 (Trip10) from Rattus norvegicus (Rat).